Here is a 121-residue protein sequence, read N- to C-terminus: UPF0344 protein BCG9842_B4136 (121 aa).

The next 4 membrane-spanning stretches (helical) occupy residues 6–26 (ITAW…YSAG), 38–58 (LMYI…VKTA), 65–85 (WYGL…MVLV), and 92–112 (PTGA…YLGL).

Belongs to the UPF0344 family.

It is found in the cell membrane. This chain is UPF0344 protein BCG9842_B4136, found in Bacillus cereus (strain G9842).